The sequence spans 222 residues: Germin-like protein 11-1 (222 aa).

A signal peptide spans 1-23 (MKLSTVLCCYLLLLGLFAPEIIS). C32 and C49 are disulfide-bonded. One can recognise a Cupin type-1 domain in the interval 72–195 (DNMVRSSANI…AMFAPDSEVA (124 aa)). Mn(2+) is bound by residues H111, H113, E118, and H157.

The protein belongs to the germin family. In terms of assembly, oligomer (believed to be a pentamer but probably hexamer).

The protein localises to the secreted. The protein resides in the extracellular space. Its subcellular location is the apoplast. In terms of biological role, may play a role in plant defense. Probably has no oxalate oxidase activity even if the active site is conserved. The protein is Germin-like protein 11-1 of Oryza sativa subsp. japonica (Rice).